A 451-amino-acid chain; its full sequence is Molybdate-anion transporter (451 aa).

12 helical membrane-spanning segments follow: residues 1–21 (MLVTAYLFLLGLLALWGVLEF), 45–65 (YDFYRTYFPALAADWLQGPYL), 79–99 (IAIIYVCGFGASVFAGLVSVP), 130–150 (FVLMTGRVLGGFSSSLLFSCF), 180–200 (NGGIAIAAGITANVCAEWLGL), 201–221 (GPASPSVLAVPLLVLSVVLVI), 251–271 (VLLLGTIQALFESVVYIFIFL), 281–301 (APLGIAFSSFMAASAVGSSLY), 316–336 (VLCLSILMVFFSLFMLTFSTA), 346–366 (LLAFLLIELACGLYFPAMRFL), 378–398 (GVLNWFRVPLNLLAGLGLLVL), and 410–430 (MFSLCAVTMLLALLCVVSLFT).

The protein belongs to the major facilitator superfamily.

It is found in the cell membrane. Functionally, mediates high-affinity intracellular uptake of the rare oligo-element molybdenum. The sequence is that of Molybdate-anion transporter (mfsd5) from Xenopus laevis (African clawed frog).